The primary structure comprises 81 residues: Antimicrobial peptide D2 (81 aa).

Positions 1 to 31 (MAKTVLGIHVTFLTLLFAVILLNDVMYTPVE) are cleaved as a signal peptide. 4 cysteine pairs are disulfide-bonded: Cys34–Cys81, Cys45–Cys66, Cys51–Cys75, and Cys55–Cys77.

Functionally, antimicrobial peptide probably active against fungi like B.sorokiniana, F.oxysporum, F.graminearum, F.avenaceum, B.cinerea, P.beta, P.infestans and P.debaryanum. The sequence is that of Antimicrobial peptide D2 from Stellaria media (Common chickweed).